A 1358-amino-acid polypeptide reads, in one-letter code: Xanthine dehydrogenase/oxidase (1358 aa).

The region spanning 8 to 95 is the 2Fe-2S ferredoxin-type domain; that stretch reads DELVFFVNGK…HVAVTTVEGI (88 aa). [2Fe-2S] cluster is bound by residues Cys47, Cys52, Cys55, Cys77, Cys117, Cys120, Cys152, and Cys154. One can recognise an FAD-binding PCMH-type domain in the interval 255–440; sequence FKGERVMWIQ…LSVEIPYSKE (186 aa). FAD contacts are provided by residues 283–290, Phe363, 373–377, Asp386, Leu430, and Lys448; these read LVVGNTEV and ALGGN. 2 residues coordinate Mo-molybdopterin: Gln796 and Phe827. Residues Glu831 and Arg909 each contribute to the substrate site. Arg941 is a binding site for Mo-molybdopterin. Substrate contacts are provided by Phe943 and Thr1039. Ala1108 is a Mo-molybdopterin binding site. Glu1290 functions as the Proton acceptor in the catalytic mechanism.

The protein belongs to the xanthine dehydrogenase family. Homodimer. The cofactor is FAD. Mo-molybdopterin is required as a cofactor. Requires [2Fe-2S] cluster as cofactor. As to expression, detected in liver (at protein level).

The protein localises to the peroxisome. Its subcellular location is the cytoplasm. It catalyses the reaction xanthine + NAD(+) + H2O = urate + NADH + H(+). The catalysed reaction is hypoxanthine + NAD(+) + H2O = xanthine + NADH + H(+). The enzyme catalyses xanthine + O2 + H2O = urate + H2O2. Functionally, key enzyme in purine degradation. Catalyzes the oxidation of hypoxanthine to xanthine. Catalyzes the oxidation of xanthine to uric acid. Contributes to the generation of reactive oxygen species. This chain is Xanthine dehydrogenase/oxidase (XDH), found in Gallus gallus (Chicken).